A 179-amino-acid chain; its full sequence is Large ribosomal subunit protein uL5 (179 aa).

It belongs to the universal ribosomal protein uL5 family. Part of the 50S ribosomal subunit; part of the 5S rRNA/L5/L18/L25 subcomplex. Contacts the 5S rRNA and the P site tRNA. Forms a bridge to the 30S subunit in the 70S ribosome.

This is one of the proteins that bind and probably mediate the attachment of the 5S RNA into the large ribosomal subunit, where it forms part of the central protuberance. In the 70S ribosome it contacts protein S13 of the 30S subunit (bridge B1b), connecting the 2 subunits; this bridge is implicated in subunit movement. Contacts the P site tRNA; the 5S rRNA and some of its associated proteins might help stabilize positioning of ribosome-bound tRNAs. The chain is Large ribosomal subunit protein uL5 from Rhodospirillum rubrum (strain ATCC 11170 / ATH 1.1.1 / DSM 467 / LMG 4362 / NCIMB 8255 / S1).